A 198-amino-acid polypeptide reads, in one-letter code: Ribosome maturation factor RimP (198 aa).

This sequence belongs to the RimP family.

The protein localises to the cytoplasm. Required for maturation of 30S ribosomal subunits. The sequence is that of Ribosome maturation factor RimP from Rhizobium etli (strain ATCC 51251 / DSM 11541 / JCM 21823 / NBRC 15573 / CFN 42).